Reading from the N-terminus, the 86-residue chain is Large ribosomal subunit protein eL43 (86 aa).

The Zn(2+) site is built by C38, C41, C57, and C60. The C4-type zinc-finger motif lies at 38–60 (CPFCGSTGTVRRVSVGVWSCRKC).

It belongs to the eukaryotic ribosomal protein eL43 family. Putative zinc-binding subfamily. As to quaternary structure, part of the 50S ribosomal subunit. Zn(2+) serves as cofactor.

Functionally, binds to the 23S rRNA. The chain is Large ribosomal subunit protein eL43 from Aeropyrum pernix (strain ATCC 700893 / DSM 11879 / JCM 9820 / NBRC 100138 / K1).